A 556-amino-acid polypeptide reads, in one-letter code: Glutamine--tRNA ligase (556 aa).

Positions 34–44 (PEPNGYLHIGH) match the 'HIGH' region motif. Residues 35–37 (EPN) and 41–47 (HIGHAKS) contribute to the ATP site. L-glutamine is bound by residues D67 and Y212. ATP contacts are provided by residues T231, 261–262 (RL), and 269–271 (MSK). The 'KMSKS' region signature appears at 268-272 (VMSKR).

It belongs to the class-I aminoacyl-tRNA synthetase family. In terms of assembly, monomer.

It localises to the cytoplasm. The catalysed reaction is tRNA(Gln) + L-glutamine + ATP = L-glutaminyl-tRNA(Gln) + AMP + diphosphate. This is Glutamine--tRNA ligase from Vibrio cholerae serotype O1 (strain ATCC 39315 / El Tor Inaba N16961).